A 347-amino-acid polypeptide reads, in one-letter code: Selenide, water dikinase (347 aa).

C17 is an active-site residue. ATP is bound by residues K20 and 48–50 (TRD). D51 lines the Mg(2+) pocket. ATP is bound by residues D68, D91, and 139–141 (GHS). D91 contacts Mg(2+). Residue D227 coordinates Mg(2+).

It belongs to the selenophosphate synthase 1 family. Class I subfamily. As to quaternary structure, homodimer. Requires Mg(2+) as cofactor.

It catalyses the reaction hydrogenselenide + ATP + H2O = selenophosphate + AMP + phosphate + 2 H(+). Functionally, synthesizes selenophosphate from selenide and ATP. The sequence is that of Selenide, water dikinase from Salmonella typhi.